Here is a 445-residue protein sequence, read N- to C-terminus: von Willebrand factor A domain-containing protein 1 (445 aa).

Residues 1–22 (MLPWTALGLALSLRLALARSGA) form the signal peptide. One can recognise a VWFA domain in the interval 34–213 (DLMFLLDSSA…ELRGSILDAM (180 aa)). Phosphoserine; by FAM20C occurs at positions 74 and 80. Tyr83 bears the Phosphotyrosine mark. A Phosphoserine; by FAM20C modification is found at Ser93. Residues 214 to 304 (RPQQLHATEI…QILRVRTRPG (91 aa)) enclose the Fibronectin type-III 1 domain. The N-linked (GlcNAc...) asparagine glycan is linked to Asn264. Disordered stretches follow at residues 302–325 (RPGE…TQLA) and 411–445 (RESA…SREP). A compositionally biased stretch (low complexity) spans 311–325 (SGPESGAGPAPTQLA). The Fibronectin type-III 2 domain occupies 334 to 427 (GPERIVISHA…KACTPDGPRP (94 aa)).

Homodimer or homomultimer; disulfide-linked. Interacts with HSPG2. In terms of processing, N-glycosylated.

The protein resides in the secreted. It is found in the extracellular space. It localises to the extracellular matrix. The protein localises to the basement membrane. In terms of biological role, promotes matrix assembly. Involved in the organization of skeletal muscles and in the formation of neuromuscular junctions. The sequence is that of von Willebrand factor A domain-containing protein 1 from Homo sapiens (Human).